A 100-amino-acid polypeptide reads, in one-letter code: NAD(P)H-quinone oxidoreductase subunit 4L, chloroplastic (100 aa).

A run of 3 helical transmembrane segments spans residues 1–21 (MIENALILGAYLFCIGFYGLI), 29–49 (ALMCLELIFNAVNINFVTFSN), and 63–83 (ISVIAIAAAEAAIGLSIILII).

The protein belongs to the complex I subunit 4L family. NDH is composed of at least 16 different subunits, 5 of which are encoded in the nucleus.

It is found in the plastid. The protein localises to the chloroplast thylakoid membrane. The enzyme catalyses a plastoquinone + NADH + (n+1) H(+)(in) = a plastoquinol + NAD(+) + n H(+)(out). It catalyses the reaction a plastoquinone + NADPH + (n+1) H(+)(in) = a plastoquinol + NADP(+) + n H(+)(out). NDH shuttles electrons from NAD(P)H:plastoquinone, via FMN and iron-sulfur (Fe-S) centers, to quinones in the photosynthetic chain and possibly in a chloroplast respiratory chain. The immediate electron acceptor for the enzyme in this species is believed to be plastoquinone. Couples the redox reaction to proton translocation, and thus conserves the redox energy in a proton gradient. This Angiopteris evecta (Mule's foot fern) protein is NAD(P)H-quinone oxidoreductase subunit 4L, chloroplastic.